Reading from the N-terminus, the 147-residue chain is Hemoglobin subunit gamma-1 (147 aa).

The residue at position 2 (Gly-2) is an N-acetylglycine. The region spanning 3–147 (HFTEEDKATI…VASALSSRYH (145 aa)) is the Globin domain. Thr-13 is modified (phosphothreonine). Phosphoserine is present on residues Ser-45, Ser-51, and Ser-53. Lys-60 bears the N6-acetyllysine mark. His-64 is a heme b binding site. An N6-acetyllysine modification is found at Lys-83. His-93 contributes to the heme b binding site. Cys-94 is subject to S-nitrosocysteine. Residue Ser-140 is modified to Phosphoserine.

This sequence belongs to the globin family. As to quaternary structure, heterotetramer of two alpha chains and two gamma chains in fetal hemoglobin (Hb F). As to expression, red blood cells.

In terms of biological role, gamma chains make up the fetal hemoglobin F, in combination with alpha chains. The chain is Hemoglobin subunit gamma-1 (HBG1) from Pongo pygmaeus (Bornean orangutan).